The primary structure comprises 369 residues: Chorismate synthase (369 aa).

Residues R48 and R54 each coordinate NADP(+). FMN contacts are provided by residues R125–S127, N238–A239, G278, K293–S297, and R319.

It belongs to the chorismate synthase family. Homotetramer. Requires FMNH2 as cofactor.

The enzyme catalyses 5-O-(1-carboxyvinyl)-3-phosphoshikimate = chorismate + phosphate. It functions in the pathway metabolic intermediate biosynthesis; chorismate biosynthesis; chorismate from D-erythrose 4-phosphate and phosphoenolpyruvate: step 7/7. Catalyzes the anti-1,4-elimination of the C-3 phosphate and the C-6 proR hydrogen from 5-enolpyruvylshikimate-3-phosphate (EPSP) to yield chorismate, which is the branch point compound that serves as the starting substrate for the three terminal pathways of aromatic amino acid biosynthesis. This reaction introduces a second double bond into the aromatic ring system. In Cupriavidus metallidurans (strain ATCC 43123 / DSM 2839 / NBRC 102507 / CH34) (Ralstonia metallidurans), this protein is Chorismate synthase.